A 68-amino-acid polypeptide reads, in one-letter code: Movement protein TGBp3 (68 aa).

The Lumenal portion of the chain corresponds to 1–6; sequence MFSGKE. The helical transmembrane segment at 7-26 threads the bilayer; it reads ITLFALSTLIALIVLNYMSA. The Cytoplasmic portion of the chain corresponds to 27 to 68; it reads TPNPVCLIELTGHSAVLRGNNCESLTSGVIEALSAHLHGLRN.

The protein belongs to the Tymovirales TGBp3 protein family.

The protein resides in the host endoplasmic reticulum membrane. Plays a role in viral cell-to-cell propagation, by facilitating genome transport to neighboring plant cells through plasmosdesmata. May induce the formation of granular vesicles derived from the Endoplasmic reticulum, which align on actin filaments. This Papaya mosaic potexvirus (PMV) protein is Movement protein TGBp3.